The chain runs to 804 residues: Endoplasmin (804 aa).

Residues 1 to 21 form the signal peptide; that stretch reads MRALWVLGLCCVLLTFGSVRA. The short motif at 42 to 44 is the SRT pseudosubstrate motif element; that stretch reads SRT. A glycan (N-linked (GlcNAc...) asparagine) is linked at Asn62. Position 64 is a phosphoserine (Ser64). Asn107 carries an N-linked (GlcNAc...) asparagine glycan. Asn107, Asp149, and Asn162 together coordinate ATP. Lys168 is subject to N6-(2-hydroxyisobutyryl)lysine. Ser172 bears the Phosphoserine mark. Phe199 lines the ATP pocket. N-linked (GlcNAc...) asparagine glycosylation is present at Asn217. The interval 288 to 323 is disordered; the sequence is TVEEPAEEEEAAKEDKEESDDEAAVEEEEDEKKPKT. Acidic residues predominate over residues 289–317; sequence VEEPAEEEEAAKEDKEESDDEAAVEEEED. Ser306 and Ser403 each carry phosphoserine. Position 404 is an N6-succinyllysine (Lys404). Asn445 carries an N-linked (GlcNAc...) asparagine glycan. Ser447 bears the Phosphoserine mark. An N6-acetyllysine modification is found at Lys479. Residues Asn481 and Asn502 are each glycosylated (N-linked (GlcNAc...) asparagine). N6-succinyllysine is present on Lys633. Residues 750–804 form a disordered region; the sequence is DPDAKVEEEPEEEPEETTEDTAEDTEQDEEEEMDAGTDEEEQETAEKSTAEKDEL. A compositionally biased stretch (acidic residues) spans 757-792; that stretch reads EEPEEEPEETTEDTAEDTEQDEEEEMDAGTDEEEQE. The residue at position 786 (Thr786) is a Phosphothreonine. Residues 793-804 show a composition bias toward basic and acidic residues; that stretch reads TAEKSTAEKDEL. The short motif at 801-804 is the Prevents secretion from ER element; it reads KDEL.

This sequence belongs to the heat shock protein 90 family. Homodimer; disulfide-linked. Component of an EIF2 complex at least composed of CELF1/CUGBP1, CALR, CALR3, EIF2S1, EIF2S2, HSP90B1 and HSPA5. Part of a large chaperone multiprotein complex comprising DNAJB11, HSP90B1, HSPA5, HYOU, PDIA2, PDIA4, PDIA6, PPIB, SDF2L1, UGGT1 and very small amounts of ERP29, but not, or at very low levels, CALR nor CANX. Interacts with AIMP1; regulates its retention in the endoplasmic reticulum. Hyperglycosylated form interacts with OS9; promoting its degradation by the endoplasmic reticulum associated degradation (ERAD). Interacts with CNPY3. This interaction is disrupted in the presence of ATP. Interacts with TLR4 and TLR9, but not with TLR3. Interacts with MZB1 in a calcium-dependent manner. Interacts with METTL23. Interacts with IL1B; the interaction facilitates cargo translocation into the ERGIC. Interacts with EIF2AK3. Phosphorylated by CK2. Post-translationally, N-glycosylated cotranslationally at Asn-217 by STT3A-containing OST-A complex: this glycosylation is constitutive. In response to various stress, 5 additional facultative sites (Asn-62, Asn-107, Asn-445, Asn-481 and Asn-502) can be glycosylated post-translationally by STT3B-containing OST-B complex, leading to a hyperglycosylated form that is degraded by the ER-associated degradation (ERAD) pathway. In normal conditions, the OST-A complex together with CCDC134 prevent glycosylation at facultative sites during protein folding, thereby preventing hyperglycosylation. Mechanistically, nascent HSP90B1 is tethered during translation to a specialized CCDC134-containing translocon that forms a microenvironment for its folding, in which STT3A associates with the SRT pseudosubstrate motif, and prevents access to facultative glycosylation sites until folding is completed, rendering its facultative sites inaccessible to the OST-B complex.

The protein resides in the endoplasmic reticulum lumen. Its subcellular location is the sarcoplasmic reticulum lumen. The protein localises to the melanosome. The catalysed reaction is ATP + H2O = ADP + phosphate + H(+). Functionally, ATP-dependent chaperone involved in the processing of proteins in the endoplasmic reticulum, regulating their transport. Together with MESD, acts as a modulator of the Wnt pathway by promoting the folding of LRP6, a coreceptor of the canonical Wnt pathway. When associated with CNPY3, required for proper folding of Toll-like receptors. Promotes folding and trafficking of TLR4 to the cell surface. May participate in the unfolding of cytosolic leaderless cargos (lacking the secretion signal sequence) such as the interleukin 1/IL-1 to facilitate their translocation into the ERGIC (endoplasmic reticulum-Golgi intermediate compartment) and secretion; the translocation process is mediated by the cargo receptor TMED10. This chain is Endoplasmin (HSP90B1), found in Bos taurus (Bovine).